We begin with the raw amino-acid sequence, 49 residues long: Large ribosomal subunit protein bL33C (49 aa).

The segment at 21-49 is disordered; that stretch reads KNKRNNPDRVEFKKYCPRDKKSTLHRETK. The span at 25-49 shows a compositional bias: basic and acidic residues; that stretch reads NNPDRVEFKKYCPRDKKSTLHRETK.

The protein belongs to the bacterial ribosomal protein bL33 family.

The polypeptide is Large ribosomal subunit protein bL33C (Bacillus licheniformis (strain ATCC 14580 / DSM 13 / JCM 2505 / CCUG 7422 / NBRC 12200 / NCIMB 9375 / NCTC 10341 / NRRL NRS-1264 / Gibson 46)).